The chain runs to 344 residues: Protein Tob2 (344 aa).

2 disordered regions span residues 144–169 (GSQDSSLSNSPSPSFGQSPSPTFIPR) and 191–225 (MKKGGGAASGGGVASSGAGGQQPPQQPRMARSPTN). A compositionally biased stretch (low complexity) spans 145-164 (SQDSSLSNSPSPSFGQSPSP). A compositionally biased stretch (gly residues) spans 194–210 (GGGAASGGGVASSGAGG). The segment covering 211–225 (QQPPQQPRMARSPTN) has biased composition (low complexity). Phosphoserine is present on Ser254.

The protein belongs to the BTG family. As to quaternary structure, associates with CAF1. Ubiquitous.

Its subcellular location is the cytoplasm. Anti-proliferative protein inhibits cell cycle progression from the G0/G1 to S phases. The protein is Protein Tob2 (TOB2) of Homo sapiens (Human).